The following is a 194-amino-acid chain: MFEYMKGMIVEAQIDKIIVEVNGIGYRINSSINSASQVKIGQVSTLFTHFVLREDEAHLYGFVDKEELAMFKKLISVSKIGPKVAAGILSTYTPQRLGAYIVSNDAQAIAKSPGVGKKTAERMILELKDKIDDSQVEYDQNFFNHENKNNNEVVDALMALGYTKHEGEQAASAVRDTSLSTEEMIRKALNWLAR.

Residues 1 to 63 (MFEYMKGMIV…EDEAHLYGFV (63 aa)) form a domain I region. The segment at 64–142 (DKEELAMFKK…DSQVEYDQNF (79 aa)) is domain II. The segment at 143–146 (FNHE) is flexible linker. The domain III stretch occupies residues 146 to 194 (ENKNNNEVVDALMALGYTKHEGEQAASAVRDTSLSTEEMIRKALNWLAR).

Belongs to the RuvA family. In terms of assembly, homotetramer. Forms an RuvA(8)-RuvB(12)-Holliday junction (HJ) complex. HJ DNA is sandwiched between 2 RuvA tetramers; dsDNA enters through RuvA and exits via RuvB. An RuvB hexamer assembles on each DNA strand where it exits the tetramer. Each RuvB hexamer is contacted by two RuvA subunits (via domain III) on 2 adjacent RuvB subunits; this complex drives branch migration. In the full resolvosome a probable DNA-RuvA(4)-RuvB(12)-RuvC(2) complex forms which resolves the HJ.

Its subcellular location is the cytoplasm. Functionally, the RuvA-RuvB-RuvC complex processes Holliday junction (HJ) DNA during genetic recombination and DNA repair, while the RuvA-RuvB complex plays an important role in the rescue of blocked DNA replication forks via replication fork reversal (RFR). RuvA specifically binds to HJ cruciform DNA, conferring on it an open structure. The RuvB hexamer acts as an ATP-dependent pump, pulling dsDNA into and through the RuvAB complex. HJ branch migration allows RuvC to scan DNA until it finds its consensus sequence, where it cleaves and resolves the cruciform DNA. The protein is Holliday junction branch migration complex subunit RuvA of Alkaliphilus metalliredigens (strain QYMF).